Consider the following 194-residue polypeptide: Acid tolerance regulatory protein ActR (194 aa).

The 115-residue stretch at 24–138 (SLLIVDDDTA…DILAALIQRP (115 aa)) folds into the Response regulatory domain. D73 is modified (4-aspartylphosphate).

In terms of processing, phosphorylated by ActS.

Member of the two-component regulatory system ActS/ActR acting in acid tolerance. These data implicate that a two-component sensor may be involved in pH sensing and/or response. In Rhizobium meliloti (strain 1021) (Ensifer meliloti), this protein is Acid tolerance regulatory protein ActR (actR).